A 491-amino-acid polypeptide reads, in one-letter code: Cysteine--tRNA ligase (491 aa).

A Zn(2+)-binding site is contributed by C31. Positions 33 to 43 (PTVYGDAHLGH) match the 'HIGH' region motif. 3 residues coordinate Zn(2+): C226, H251, and E255. The 'KMSKS' region motif lies at 283-287 (KMGKS). ATP is bound at residue K286.

This sequence belongs to the class-I aminoacyl-tRNA synthetase family. In terms of assembly, monomer. Zn(2+) serves as cofactor.

It localises to the cytoplasm. The catalysed reaction is tRNA(Cys) + L-cysteine + ATP = L-cysteinyl-tRNA(Cys) + AMP + diphosphate. This Bacteroides fragilis (strain ATCC 25285 / DSM 2151 / CCUG 4856 / JCM 11019 / LMG 10263 / NCTC 9343 / Onslow / VPI 2553 / EN-2) protein is Cysteine--tRNA ligase.